The primary structure comprises 1342 residues: DNA-directed RNA polymerase subunit beta (1342 aa).

The protein belongs to the RNA polymerase beta chain family. In terms of assembly, the RNAP catalytic core consists of 2 alpha, 1 beta, 1 beta' and 1 omega subunit. When a sigma factor is associated with the core the holoenzyme is formed, which can initiate transcription.

It carries out the reaction RNA(n) + a ribonucleoside 5'-triphosphate = RNA(n+1) + diphosphate. Its function is as follows. DNA-dependent RNA polymerase catalyzes the transcription of DNA into RNA using the four ribonucleoside triphosphates as substrates. This chain is DNA-directed RNA polymerase subunit beta, found in Wigglesworthia glossinidia brevipalpis.